The sequence spans 443 residues: D-aminoacyl-tRNA deacylase (443 aa).

This sequence belongs to the DtdA deacylase family. Monomer. Zn(2+) is required as a cofactor.

The enzyme catalyses a D-aminoacyl-tRNA + H2O = a tRNA + a D-alpha-amino acid + H(+). The catalysed reaction is glycyl-tRNA(Ala) + H2O = tRNA(Ala) + glycine + H(+). D-aminoacyl-tRNA deacylase with broad substrate specificity. By recycling D-aminoacyl-tRNA to D-amino acids and free tRNA molecules, this enzyme counteracts the toxicity associated with the formation of D-aminoacyl-tRNA entities in vivo. This Methanocorpusculum labreanum (strain ATCC 43576 / DSM 4855 / Z) protein is D-aminoacyl-tRNA deacylase.